Consider the following 322-residue polypeptide: tRNA (guanine-N(7)-)-methyltransferase (322 aa).

Residues Glu29, Glu55, and Asp105 each coordinate S-adenosyl-L-methionine. The active site involves Asp105. Lys109 and Asp141 together coordinate substrate.

This sequence belongs to the class I-like SAM-binding methyltransferase superfamily. TrmB family.

It catalyses the reaction guanosine(46) in tRNA + S-adenosyl-L-methionine = N(7)-methylguanosine(46) in tRNA + S-adenosyl-L-homocysteine. The protein operates within tRNA modification; N(7)-methylguanine-tRNA biosynthesis. In terms of biological role, catalyzes the formation of N(7)-methylguanine at position 46 (m7G46) in tRNA. This chain is tRNA (guanine-N(7)-)-methyltransferase, found in Deinococcus radiodurans (strain ATCC 13939 / DSM 20539 / JCM 16871 / CCUG 27074 / LMG 4051 / NBRC 15346 / NCIMB 9279 / VKM B-1422 / R1).